Here is a 121-residue protein sequence, read N- to C-terminus: Apoptin (121 aa).

Disordered stretches follow at residues 1 to 28 (MNALQEDTPPGPSTVFRPPTSSRPLETP) and 57 to 121 (LRSA…CIRL). Residues 58–70 (RSATADNSESTGF) show a composition bias toward polar residues. Positions 88 to 102 (RSCDPSEYRVSELKE) are enriched in basic and acidic residues.

It belongs to the gyrovirus apoptin family.

The protein resides in the host nucleus. In terms of biological role, may act as transcriptional regulator. Induces apoptosis in infected cells. Element of infectious replication cycle. This chain is Apoptin (VP3), found in Gallus gallus (Chicken).